The following is a 180-amino-acid chain: MKELIVNQEKRVSPELHYEISQFLYYEIALLDEWRFRDWLELLSEDLSYTMRTIVNAQTRDRRKSIQPPTTWLFNDNKFQLERRIARLETGMAWAEEPPSRTRHLLTNLVITETDLPDQFHVQSNYLLYRSQKERDEVFYVGKRLDCVRRNPKTDSWLICKREITLDQAVLTFHNLSVLF.

Belongs to the bacterial ring-hydroxylating dioxygenase beta subunit family. In terms of assembly, this dioxygenase system consists of four proteins: the two subunits of the hydroxylase component (HcaE and HcaF), a ferredoxin (HcaC) and a ferredoxin reductase (HcaD).

The enzyme catalyses 3-phenylpropanoate + NADH + O2 + H(+) = 3-(cis-5,6-dihydroxycyclohexa-1,3-dien-1-yl)propanoate + NAD(+). The catalysed reaction is (E)-cinnamate + NADH + O2 + H(+) = (2E)-3-(cis-5,6-dihydroxycyclohexa-1,3-dien-1-yl)prop-2-enoate + NAD(+). It participates in aromatic compound metabolism; 3-phenylpropanoate degradation. Part of the multicomponent 3-phenylpropionate dioxygenase. Converts 3-phenylpropionic acid (PP) and cinnamic acid (CI) into 3-phenylpropionate-dihydrodiol (PP-dihydrodiol) and cinnamic acid-dihydrodiol (CI-dihydrodiol), respectively. The chain is 3-phenylpropionate/cinnamic acid dioxygenase subunit beta from Photorhabdus laumondii subsp. laumondii (strain DSM 15139 / CIP 105565 / TT01) (Photorhabdus luminescens subsp. laumondii).